The primary structure comprises 202 residues: 3-isopropylmalate dehydratase small subunit (202 aa).

This sequence belongs to the LeuD family. LeuD type 1 subfamily. Heterodimer of LeuC and LeuD.

It catalyses the reaction (2R,3S)-3-isopropylmalate = (2S)-2-isopropylmalate. It functions in the pathway amino-acid biosynthesis; L-leucine biosynthesis; L-leucine from 3-methyl-2-oxobutanoate: step 2/4. Functionally, catalyzes the isomerization between 2-isopropylmalate and 3-isopropylmalate, via the formation of 2-isopropylmaleate. The protein is 3-isopropylmalate dehydratase small subunit of Nocardioides sp. (strain ATCC BAA-499 / JS614).